We begin with the raw amino-acid sequence, 843 residues long: Respiratory burst oxidase homolog protein B (843 aa).

The segment covering 1-10 (MREEEMESSS) has biased composition (acidic residues). Positions 1-27 (MREEEMESSSEGETNKISRCKATGSDN) are disordered. Residues 1–297 (MREEEMESSS…SYFFLENWKR (297 aa)) are Cytoplasmic-facing. EF-hand-like stretches follow at residues 114 to 122 (AVEGKLPKS) and 148 to 159 (RGTTSSSITKTE). EF-hand domains lie at 171 to 206 (SFDDRLQIFFDMVDKNLDGRITGDEVKEIIALSASA) and 215 to 250 (NVDEYAALIMEELDRDNLGYIELHNLETLLLQVPSQ). Asp184, Asn186, Asp188, Arg190, and Glu195 together coordinate Ca(2+). Ser268 carries the post-translational modification Phosphoserine. A helical transmembrane segment spans residues 298–318 (IWVLTLWISICITLFTWKFLQ). The Extracellular portion of the chain corresponds to 319–383 (YKRKTVFEVM…FDDNINFHKV (65 aa)). Residues 336–495 (KGSAETLKFN…LFVIVYVLLI (160 aa)) form the Ferric oxidoreductase domain. The chain crosses the membrane as a helical span at residues 384 to 404 (VAFGIAVGIGLHAISHLACDF). Topologically, residues 405-439 (PRLLHAKNVEFEPMKKFFGDERPENYGWFMKGTDG) are cytoplasmic. Residues 440–460 (WTGVTMVVLMLVAYVLAQSWF) form a helical membrane-spanning segment. Over 461–482 (RRNRANLPKSLKRLTGFNAFWY) the chain is Extracellular. A helical transmembrane segment spans residues 483–503 (SHHLFVIVYVLLIVHGYFVYL). Over 504-511 (SKEWYHKT) the chain is Cytoplasmic. A helical transmembrane segment spans residues 512-529 (TWMYLAVPVLLYAFERLI). At 530 to 659 (RAFRPGAKAV…PYGAPAQDYR (130 aa)) the chain is on the extracellular side. In terms of domain architecture, FAD-binding FR-type spans 534-657 (PGAKAVKVLK…DGPYGAPAQD (124 aa)). A helical transmembrane segment spans residues 660-680 (NYDVLLLVGLGIGATPLISII). The Cytoplasmic segment spans residues 681–843 (RDVLNNIKNQ…TKFEFHKENF (163 aa)).

This sequence belongs to the RBOH (TC 5.B.1.3) family. As to quaternary structure, monomer and homodimer.

Its subcellular location is the membrane. Functionally, calcium-dependent NADPH oxidase that generates superoxide. This Arabidopsis thaliana (Mouse-ear cress) protein is Respiratory burst oxidase homolog protein B (RBOHB).